Reading from the N-terminus, the 356-residue chain is S-adenosylmethionine:tRNA ribosyltransferase-isomerase (356 aa).

This sequence belongs to the QueA family. As to quaternary structure, monomer.

The protein resides in the cytoplasm. It carries out the reaction 7-aminomethyl-7-carbaguanosine(34) in tRNA + S-adenosyl-L-methionine = epoxyqueuosine(34) in tRNA + adenine + L-methionine + 2 H(+). Its pathway is tRNA modification; tRNA-queuosine biosynthesis. In terms of biological role, transfers and isomerizes the ribose moiety from AdoMet to the 7-aminomethyl group of 7-deazaguanine (preQ1-tRNA) to give epoxyqueuosine (oQ-tRNA). This Citrobacter koseri (strain ATCC BAA-895 / CDC 4225-83 / SGSC4696) protein is S-adenosylmethionine:tRNA ribosyltransferase-isomerase.